Here is a 576-residue protein sequence, read N- to C-terminus: MAGUK p55 subfamily member 2 (576 aa).

L27 domains are found at residues 8-60 (SETA…FMQQ) and 84-142 (LEAV…YETP). The residue at position 42 (Ser-42) is a Phosphoserine. At Thr-141 the chain carries Phosphothreonine. A Phosphoserine modification is found at Ser-145. The 56-residue stretch at 185-240 (ELVIARILHGGMVAQQGLLHVGDIIKEVNGQPVGSDPRALQELLRNASGSVILKIL) folds into the PDZ domain. Positions 249 to 317 (PRQVFVKCHF…PSQLLEEKRK (69 aa)) constitute an SH3 domain. The Guanylate kinase-like domain maps to 374-561 (RKTLVLIGAQ…TFRELQTAME (188 aa)).

The protein belongs to the MAGUK family. In terms of assembly, can homomultimerise. Interacts with CACNG2. Interacts (via the SH3-Guanylate kinase-like sub-module) with DLG4/PSD95 and DLGAP1/GKAP. Interacts (via the PDZ domain) with CADM1 (via C-terminus). Interacts with KCNN2/SK2 (via N-terminal domain). Interacts with SRC. Phosphorylated by SRC.

The protein localises to the cytoplasm. It localises to the cytoskeleton. The protein resides in the membrane. It is found in the cell projection. Its subcellular location is the dendrite. The protein localises to the postsynaptic density. Its function is as follows. Postsynaptic MAGUK scaffold protein that links CADM1 cell adhesion molecules to core components of the postsynaptic density. In CA1 pyramidal neurons, required for synaptic KCNN2-containing channel function and long-term potentiation expression. Seems to negatively regulate SRC function in epithelial cells. The polypeptide is MAGUK p55 subfamily member 2 (Homo sapiens (Human)).